We begin with the raw amino-acid sequence, 296 residues long: Glycine N-acyltransferase-like protein (296 aa).

The residue at position 41 (K41) is an N6-acetyllysine; alternate. K41 carries the post-translational modification N6-succinyllysine; alternate. N6-acetyllysine is present on K43. K48 carries the N6-acetyllysine; alternate modification. K48 bears the N6-succinyllysine; alternate mark. An N6-acetyllysine mark is found at K80 and K83. Residues K183 and K256 each carry the N6-acetyllysine; alternate modification. N6-succinyllysine; alternate occurs at positions 183 and 256.

It belongs to the glycine N-acyltransferase family.

It localises to the mitochondrion. The catalysed reaction is an acyl-CoA + glycine = an N-acylglycine + CoA + H(+). Mitochondrial acyltransferase which transfers the acyl group to the N-terminus of glycine. Can conjugate a multitude of substrates to form a variety of N-acylglycines. The polypeptide is Glycine N-acyltransferase-like protein (Gm4952) (Mus musculus (Mouse)).